A 338-amino-acid polypeptide reads, in one-letter code: DNA-directed RNA polymerase subunit alpha (338 aa).

The segment at M1–E234 is alpha N-terminal domain (alpha-NTD). The interval F250–I338 is alpha C-terminal domain (alpha-CTD).

The protein belongs to the RNA polymerase alpha chain family. Homodimer. The RNAP catalytic core consists of 2 alpha, 1 beta, 1 beta' and 1 omega subunit. When a sigma factor is associated with the core the holoenzyme is formed, which can initiate transcription.

It carries out the reaction RNA(n) + a ribonucleoside 5'-triphosphate = RNA(n+1) + diphosphate. DNA-dependent RNA polymerase catalyzes the transcription of DNA into RNA using the four ribonucleoside triphosphates as substrates. This chain is DNA-directed RNA polymerase subunit alpha, found in Caulobacter vibrioides (strain ATCC 19089 / CIP 103742 / CB 15) (Caulobacter crescentus).